The sequence spans 72 residues: Cell division protein ZapB (72 aa).

Residues 1-72 (MSLEILDQLE…RSLLGKIDNV (72 aa)) adopt a coiled-coil conformation. Residues 33-57 (KNNQSQQANDALRSENEQLKSEHQN) are disordered. Residues 44–57 (LRSENEQLKSEHQN) are compositionally biased toward basic and acidic residues.

It belongs to the ZapB family. As to quaternary structure, homodimer. The ends of the coiled-coil dimer bind to each other, forming polymers. Interacts with FtsZ.

It localises to the cytoplasm. Functionally, non-essential, abundant cell division factor that is required for proper Z-ring formation. It is recruited early to the divisome by direct interaction with FtsZ, stimulating Z-ring assembly and thereby promoting cell division earlier in the cell cycle. Its recruitment to the Z-ring requires functional FtsA or ZipA. In Pasteurella multocida (strain Pm70), this protein is Cell division protein ZapB.